Reading from the N-terminus, the 113-residue chain is Large ribosomal subunit protein bL19 (113 aa).

Belongs to the bacterial ribosomal protein bL19 family.

Functionally, this protein is located at the 30S-50S ribosomal subunit interface and may play a role in the structure and function of the aminoacyl-tRNA binding site. This is Large ribosomal subunit protein bL19 from Corynebacterium glutamicum (strain R).